Reading from the N-terminus, the 129-residue chain is Translation initiation factor 5A (129 aa).

K36 is subject to Hypusine.

It belongs to the eIF-5A family.

The protein localises to the cytoplasm. Its function is as follows. Functions by promoting the formation of the first peptide bond. The polypeptide is Translation initiation factor 5A (eif5a) (Thermoplasma acidophilum (strain ATCC 25905 / DSM 1728 / JCM 9062 / NBRC 15155 / AMRC-C165)).